The primary structure comprises 89 residues: Myrmicitoxin(1)-Pr2c (89 aa).

The N-terminal stretch at 1–23 is a signal peptide; sequence MEIPKLLYIAVIAIGLSGSLTCA. The propeptide occupies 24-61; the sequence is TPLANPWADPEAEANPKAKATAEATAEAIAEALAEPEP. Asparagine amide is present on Asn88.

It belongs to the formicidae venom clade 1 family. As to expression, expressed by the venom gland.

It localises to the secreted. Its function is as follows. Vertebrate-selective toxin that causes pain by targeting voltage-gated sodium channels. The chain is Myrmicitoxin(1)-Pr2c from Pogonomyrmex rugosus (Desert harvester ant).